We begin with the raw amino-acid sequence, 190 residues long: Putative 3-methyladenine DNA glycosylase (190 aa).

It belongs to the DNA glycosylase MPG family.

This chain is Putative 3-methyladenine DNA glycosylase, found in Rubrobacter xylanophilus (strain DSM 9941 / JCM 11954 / NBRC 16129 / PRD-1).